The primary structure comprises 559 residues: Nicotinate phosphoribosyltransferase 1 (559 aa).

Nicotinate-binding residues include Tyr33 and Thr221. Phosphohistidine is present on His224. Arg331 lines the nicotinate pocket. 5-phospho-alpha-D-ribose 1-diphosphate is bound at residue Thr393.

The protein belongs to the NAPRTase family. It depends on Mg(2+) as a cofactor. Mn(2+) is required as a cofactor. In terms of processing, transiently phosphorylated on a His residue during the reaction cycle. Phosphorylation strongly increases the affinity for substrates and increases the rate of nicotinate D-ribonucleotide production. Dephosphorylation regenerates the low-affinity form of the enzyme, leading to product release.

It carries out the reaction nicotinate + 5-phospho-alpha-D-ribose 1-diphosphate + ATP + H2O = nicotinate beta-D-ribonucleotide + ADP + phosphate + diphosphate. It functions in the pathway cofactor biosynthesis; NAD(+) biosynthesis; nicotinate D-ribonucleotide from nicotinate: step 1/1. Its function is as follows. Catalyzes the first step in the biosynthesis of NAD from nicotinic acid, the ATP-dependent synthesis of beta-nicotinate D-ribonucleotide from nicotinate and 5-phospho-D-ribose 1-phosphate. Helps prevent cellular oxidative stress via its role in NAD biosynthesis. In Arabidopsis thaliana (Mouse-ear cress), this protein is Nicotinate phosphoribosyltransferase 1.